The sequence spans 154 residues: Myoglobin (154 aa).

Residues glycine 2–lysine 148 enclose the Globin domain. Serine 4 carries the post-translational modification Phosphoserine. Histidine 65 contacts nitrite. Residue histidine 65 participates in O2 binding. Threonine 68 carries the phosphothreonine modification. Position 94 (histidine 94) interacts with heme b.

It belongs to the globin family. Monomeric.

It is found in the cytoplasm. Its subcellular location is the sarcoplasm. The catalysed reaction is Fe(III)-heme b-[protein] + nitric oxide + H2O = Fe(II)-heme b-[protein] + nitrite + 2 H(+). The enzyme catalyses H2O2 + AH2 = A + 2 H2O. Its function is as follows. Monomeric heme protein which primary function is to store oxygen and facilitate its diffusion within muscle tissues. Reversibly binds oxygen through a pentacoordinated heme iron and enables its timely and efficient release as needed during periods of heightened demand. Depending on the oxidative conditions of tissues and cells, and in addition to its ability to bind oxygen, it also has a nitrite reductase activity whereby it regulates the production of bioactive nitric oxide. Under stress conditions, like hypoxia and anoxia, it also protects cells against reactive oxygen species thanks to its pseudoperoxidase activity. The protein is Myoglobin (MB) of Erythrocebus patas (Red guenon).